An 83-amino-acid polypeptide reads, in one-letter code: NADH dehydrogenase [ubiquinone] iron-sulfur protein 5-B (83 aa).

Positions 11 to 52 (KGRCYDFWMDFSECMSHCREPKDCTLLREDYLECLHHSKEFQ) constitute a CHCH domain. 2 consecutive short sequence motifs (cx9C motif) follow at residues 14 to 24 (CYDFWMDFSEC) and 34 to 44 (CTLLREDYLEC). Disulfide bonds link Cys14/Cys44 and Cys24/Cys34. A disordered region spans residues 62–83 (QRKLRAASRKGEETGDGTHTHH).

It belongs to the complex I NDUFS5 subunit family. In terms of assembly, complex I is composed of at least 49 different subunits. This is a component of the iron-sulfur (IP) fragment of the enzyme.

The protein resides in the mitochondrion. Its subcellular location is the mitochondrion inner membrane. It is found in the mitochondrion intermembrane space. Its function is as follows. Accessory subunit of the mitochondrial membrane respiratory chain NADH dehydrogenase (Complex I), that is believed not to be involved in catalysis. Complex I functions in the transfer of electrons from NADH to the respiratory chain. The immediate electron acceptor for the enzyme is believed to be ubiquinone. In Arabidopsis thaliana (Mouse-ear cress), this protein is NADH dehydrogenase [ubiquinone] iron-sulfur protein 5-B.